The sequence spans 43 residues: Large ribosomal subunit protein uL5 (43 aa).

The protein belongs to the universal ribosomal protein uL5 family. In terms of assembly, part of the 50S ribosomal subunit; part of the 5S rRNA/L5/L18/L25 subcomplex. Contacts the 5S rRNA and the P site tRNA. Forms a bridge to the 30S subunit in the 70S ribosome.

Functionally, this is one of the proteins that bind and probably mediate the attachment of the 5S RNA into the large ribosomal subunit, where it forms part of the central protuberance. In the 70S ribosome it contacts protein S13 of the 30S subunit (bridge B1b), connecting the 2 subunits; this bridge is implicated in subunit movement. Contacts the P site tRNA; the 5S rRNA and some of its associated proteins might help stabilize positioning of ribosome-bound tRNAs. The protein is Large ribosomal subunit protein uL5 (rplE) of Serratia marcescens.